The primary structure comprises 210 residues: Translation initiation factor IF-3 (210 aa).

Residues 169 to 210 (APKQAPAPKKERTEESAEKAGSAGETEPVPAASAAAEAPANV) are disordered. Residues 176–186 (PKKERTEESAE) show a composition bias toward basic and acidic residues. Low complexity predominate over residues 187-210 (KAGSAGETEPVPAASAAAEAPANV).

This sequence belongs to the IF-3 family. Monomer.

It is found in the cytoplasm. In terms of biological role, IF-3 binds to the 30S ribosomal subunit and shifts the equilibrium between 70S ribosomes and their 50S and 30S subunits in favor of the free subunits, thus enhancing the availability of 30S subunits on which protein synthesis initiation begins. The polypeptide is Translation initiation factor IF-3 (Deinococcus deserti (strain DSM 17065 / CIP 109153 / LMG 22923 / VCD115)).